A 335-amino-acid polypeptide reads, in one-letter code: NAC domain-containing protein 87 (335 aa).

Residues 21-172 (LPPGFRFHPT…EWVVCRVFHK (152 aa)) enclose the NAC domain. Residues 119–178 (VGMKKTLVFYRGRAPKGEKTNWVMHEYRLEGKYSYYNLPKSARDEWVVCRVFHKNNPSTT) mediate DNA binding.

It localises to the nucleus. Its function is as follows. Binds to the promoter regions of genes involved in chlorophyll catabolic processes, such as NYC1, SGR1, SGR2 and PAO. This chain is NAC domain-containing protein 87, found in Arabidopsis thaliana (Mouse-ear cress).